The sequence spans 1004 residues: Glutamate [NMDA] receptor subunit 1 (1004 aa).

The signal sequence occupies residues 1 to 39 (MAGTDSPAAARFVYRCLLFAPAIVVGLLLPLTLPPIAAA). At 40–585 (QRHTASDNPS…TLVSFLQPFS (546 aa)) the chain is on the extracellular side. N-linked (GlcNAc...) asparagine glycosylation is found at asparagine 270, asparagine 326, asparagine 357, asparagine 409, asparagine 466, asparagine 493, and asparagine 513. Glycine is bound by residues 542-544 (PLT) and arginine 549. Residues 586–606 (NTLWILVMVSVHVVALVLYLL) form a helical membrane-spanning segment. Residues 607–663 (DRFSPFGRFKLSHSDSNEEKALNLSSAVWFAWGVLLNSGIGEGTPRSFSARVLGMVW) lie on the Cytoplasmic side of the membrane. Residues 664–684 (AGFAMIIVASYTANLAAFLVL) form a helical membrane-spanning segment. Residues 685–843 (ERPKTKLSGI…KTPNTLGLKN (159 aa)) are Extracellular-facing. Asparagine 705 is a glycosylation site (N-linked (GlcNAc...) asparagine). Residues serine 715 and aspartate 759 each coordinate glycine. Residues 844-864 (MAGVFILVGVGIAGGVGLIII) traverse the membrane as a helical segment. At 865-1004 (EVIYKKHQVK…YTSDVSHLVV (140 aa)) the chain is on the cytoplasmic side. Positions 980-1004 (TRPQQNILPPRYSPGYTSDVSHLVV) are disordered. Residues 994–1004 (GYTSDVSHLVV) show a composition bias toward polar residues.

The protein belongs to the glutamate-gated ion channel (TC 1.A.10.1) family. In terms of assembly, forms a heteromeric NMDA channel with Nmdar2.

The protein localises to the cell membrane. It localises to the postsynaptic cell membrane. It is found in the postsynaptic density. Its function is as follows. NMDA receptor subtype of glutamate-gated ion channels with high calcium permeability and voltage-dependent sensitivity to magnesium. Mediated by glycine. This protein plays a key role in synaptic plasticity, synaptogenesis, excitotoxicity, memory acquisition and learning. It mediates neuronal functions in glutamate neurotransmission. Is involved in the cell surface targeting of NMDA receptors. Plays a role in associative learning and in long-term memory consolidation. The polypeptide is Glutamate [NMDA] receptor subunit 1 (Drosophila pseudoobscura pseudoobscura (Fruit fly)).